We begin with the raw amino-acid sequence, 430 residues long: Enolase (430 aa).

Residue Gln163 coordinates (2R)-2-phosphoglycerate. Glu205 (proton donor) is an active-site residue. Residues Asp242, Glu287, and Asp314 each coordinate Mg(2+). The (2R)-2-phosphoglycerate site is built by Lys339, Arg368, Ser369, and Lys390. Residue Lys339 is the Proton acceptor of the active site.

It belongs to the enolase family. The cofactor is Mg(2+).

Its subcellular location is the cytoplasm. It localises to the secreted. The protein resides in the cell surface. The enzyme catalyses (2R)-2-phosphoglycerate = phosphoenolpyruvate + H2O. Its pathway is carbohydrate degradation; glycolysis; pyruvate from D-glyceraldehyde 3-phosphate: step 4/5. Catalyzes the reversible conversion of 2-phosphoglycerate (2-PG) into phosphoenolpyruvate (PEP). It is essential for the degradation of carbohydrates via glycolysis. The sequence is that of Enolase from Bacillus licheniformis (strain ATCC 14580 / DSM 13 / JCM 2505 / CCUG 7422 / NBRC 12200 / NCIMB 9375 / NCTC 10341 / NRRL NRS-1264 / Gibson 46).